Consider the following 263-residue polypeptide: Rhomboid-like protease 3 (263 aa).

Transmembrane regions (helical) follow at residues 37 to 57 (KSIV…CVLS), 86 to 106 (VVTP…LVFI), 121 to 141 (KFLV…MLMQ), 142 to 162 (PWAL…GMAA), 189 to 209 (LIYF…GGFL), and 231 to 251 (VLFY…PPLL). Ser150 functions as the Nucleophile in the catalytic mechanism. Residue His204 is part of the active site.

It belongs to the peptidase S54 family.

The protein localises to the membrane. It carries out the reaction Cleaves type-1 transmembrane domains using a catalytic dyad composed of serine and histidine that are contributed by different transmembrane domains.. In terms of biological role, serine protease involved in intramembrane proteolysis and the subsequent release of polypeptides from their membrane anchors. In Toxoplasma gondii, this protein is Rhomboid-like protease 3 (ROM3).